Consider the following 89-residue polypeptide: UPF0223 protein BAMEG_4214 (89 aa).

It belongs to the UPF0223 family.

This is UPF0223 protein BAMEG_4214 from Bacillus anthracis (strain CDC 684 / NRRL 3495).